The following is a 262-amino-acid chain: Enoyl-[acyl-carrier-protein] reductase [NADH] FabI (262 aa).

Residues Gly13, 19–20, Gln40, 64–65, and Ile92 contribute to the NAD(+) site; these read SI and DV. Ala95 serves as a coordination point for substrate. Active-site proton acceptor residues include Tyr146 and Tyr156. NAD(+) is bound by residues Lys163 and 192–196; that span reads IRTLA.

This sequence belongs to the short-chain dehydrogenases/reductases (SDR) family. FabI subfamily. In terms of assembly, homotetramer.

It catalyses the reaction a 2,3-saturated acyl-[ACP] + NAD(+) = a (2E)-enoyl-[ACP] + NADH + H(+). It carries out the reaction (2E)-butenoyl-[ACP] + NADH + H(+) = butanoyl-[ACP] + NAD(+). The enzyme catalyses (2E)-decenoyl-[ACP] + NADH + H(+) = decanoyl-[ACP] + NAD(+). The catalysed reaction is (2E)-hexadecenoyl-[ACP] + NADH + H(+) = hexadecanoyl-[ACP] + NAD(+). It catalyses the reaction (2E,9Z)-hexadecadienoyl-[ACP] + NADH + H(+) = (9Z)-hexadecenoyl-[ACP] + NAD(+). It carries out the reaction (2E)-5-methylhexenoyl-[ACP] + NADH + H(+) = 5-methylhexanoyl-[ACP] + NAD(+). Its pathway is lipid metabolism; fatty acid biosynthesis. It participates in cofactor biosynthesis; biotin biosynthesis. With respect to regulation, inhibited by diazaborines, triclosan (5-chloro-2-2,4-dichlorophenoxyphenol), 1,4-disubstituted imidazoles, 1,4-benzodiazepine derivatives, naphthyridinone derivatives, luteolin and curcumin. The antibiotic diazaborine interferes with the activity by binding to the protein and NAD. In terms of biological role, catalyzes the reduction of a carbon-carbon double bond in an enoyl moiety that is covalently linked to an acyl carrier protein (ACP). Involved in the elongation cycle of fatty acid which are used in the lipid metabolism and in the biotin biosynthesis. This is Enoyl-[acyl-carrier-protein] reductase [NADH] FabI (fabI) from Escherichia coli (strain K12).